Consider the following 134-residue polypeptide: Sec-independent protein translocase protein TatB (134 aa).

The helical transmembrane segment at Phe2–Gly22 threads the bilayer. Positions Ala90–Lys134 are disordered. Residues Ser123–Lys134 are compositionally biased toward polar residues.

Belongs to the TatB family. In terms of assembly, the Tat system comprises two distinct complexes: a TatABC complex, containing multiple copies of TatA, TatB and TatC subunits, and a separate TatA complex, containing only TatA subunits. Substrates initially bind to the TatABC complex, which probably triggers association of the separate TatA complex to form the active translocon.

It localises to the cell inner membrane. Its function is as follows. Part of the twin-arginine translocation (Tat) system that transports large folded proteins containing a characteristic twin-arginine motif in their signal peptide across membranes. Together with TatC, TatB is part of a receptor directly interacting with Tat signal peptides. TatB may form an oligomeric binding site that transiently accommodates folded Tat precursor proteins before their translocation. This chain is Sec-independent protein translocase protein TatB, found in Shewanella frigidimarina (strain NCIMB 400).